We begin with the raw amino-acid sequence, 190 residues long: Imidazoleglycerol-phosphate dehydratase (190 aa).

The protein belongs to the imidazoleglycerol-phosphate dehydratase family.

The protein resides in the cytoplasm. The catalysed reaction is D-erythro-1-(imidazol-4-yl)glycerol 3-phosphate = 3-(imidazol-4-yl)-2-oxopropyl phosphate + H2O. The protein operates within amino-acid biosynthesis; L-histidine biosynthesis; L-histidine from 5-phospho-alpha-D-ribose 1-diphosphate: step 6/9. The sequence is that of Imidazoleglycerol-phosphate dehydratase from Methanococcus maripaludis (strain C5 / ATCC BAA-1333).